We begin with the raw amino-acid sequence, 153 residues long: Endoribonuclease YbeY (153 aa).

Positions 118, 122, and 128 each coordinate Zn(2+).

This sequence belongs to the endoribonuclease YbeY family. It depends on Zn(2+) as a cofactor.

The protein localises to the cytoplasm. In terms of biological role, single strand-specific metallo-endoribonuclease involved in late-stage 70S ribosome quality control and in maturation of the 3' terminus of the 16S rRNA. This Chloroflexus aggregans (strain MD-66 / DSM 9485) protein is Endoribonuclease YbeY.